Here is a 134-residue protein sequence, read N- to C-terminus: Histone H3-like centromeric protein A (134 aa).

Basic residues predominate over residues 1-14; the sequence is MGPRRKPQTPRRRP. The interval 1-34 is disordered; the sequence is MGPRRKPQTPRRRPSSPAPGPSRQSSSVGSQTLR. Glycine 2 bears the N,N,N-trimethylglycine mark. A phosphoserine mark is found at serine 16 and serine 22. The interval 34–48 is important for flexibility of DNA ends that protrude from nucleosomes; that stretch reads RRRQKFMWLKEIKTL. The tract at residues 35–134 is H3-like; it reads RRQKFMWLKE…RIRGFEGGLP (100 aa). Serine 62 carries the phosphoserine modification. The segment at 69 to 110 is CATD; it reads CEKFSRGVDFWWQAQALLALQEAAEAFLIHLFEDAYLLSLHA.

The protein belongs to the histone H3 family. In terms of assembly, component of centromeric nucleosomes, where DNA is wrapped around a histone octamer core. The octamer contains two molecules each of H2A, H2B, CENPA and H4 assembled in one CENPA-H4 heterotetramer and two H2A-H2B heterodimers. CENPA modulates the DNA-binding characteristics of nucleosomes so that protruding DNA ends have higher flexibility than in nucleosomes containing conventional histone H3. Inhibits binding of histone H1 to nucleosomes, since histone H1 binds preferentially to rigid DNA linkers that protrude from nucleosomes. Nucleosomes containing CENPA also contain histone H2A variants such as MACROH2A and H2A.Z/H2AZ1. The CENPA-H4 heterotetramer is more compact and structurally more rigid than corresponding H3-H4 heterotetramers. Can assemble into nucleosomes that contain both CENPA and histone H3.3; these nucleosomes interact with a single CENPC chain. Heterotrimer composed of HJURP, CENPA and histone H4, where HJURP interacts with the dimer formed by CENPA and histone H4 and prevents tetramerization of CENPA and H4. Component of the CENPA-NAC complex, at least composed of CENPA, CENPC, CENPH, CENPM, CENPN, CENPT and CENPU. Interacts (via CATD domain) with HJURP; the interaction is direct and is required for its localization to centromeres. Interacts with CENPC, CENPN and CENPT; interaction is direct. Part of a centromere complex consisting of CENPA, CENPT and CENPW. Identified in centromere complexes containing histones H2A, H2B and H4, and at least CENPA, CENPB, CENPC, CENPT, CENPN, HJURP, SUPT16H, SSRP1 and RSF1. Can self-associate. The CENPA-H4 heterotetramer can bind DNA by itself (in vitro). Interacts with CDK1, PPP1CA and RBBP7. Poly-ADP-ribosylated by PARP1. In terms of processing, trimethylated by NTMT1 at the N-terminal glycine after cleavage of Met-1. Methylation is low before incorporation into nucleosomes and increases with cell cycle progression, with the highest levels in mitotic nucleosomes. Post-translationally, phosphorylated by CDK1 at Ser-62 during early mitosis; this abolishes association with chromatin and centromeres, prevents interaction with HJURP and thereby prevents premature assembly of CENPA into centromeres. Dephosphorylated at Ser-62 by PPP1CA during late mitosis.

It is found in the nucleus. Its subcellular location is the chromosome. The protein localises to the centromere. Functionally, histone H3-like nucleosomal protein that is specifically found in centromeric nucleosomes. Replaces conventional H3 in the nucleosome core of centromeric chromatin that serves as an assembly site for the inner kinetochore. The presence of CENPA subtly modifies the nucleosome structure and the way DNA is wrapped around the nucleosome and gives rise to protruding DNA ends that are less well-ordered and rigid compared to nucleosomes containing histone H3. May serve as an epigenetic mark that propagates centromere identity through replication and cell division. Required for recruitment and assembly of kinetochore proteins, and as a consequence required for progress through mitosis, chromosome segregation and cytokinesis. This Mus musculus (Mouse) protein is Histone H3-like centromeric protein A (Cenpa).